The primary structure comprises 276 residues: Orotidine 5'-phosphate decarboxylase (276 aa).

Residues Asp-40, 62–64 (KTH), 93–102 (DRKFIDIGNT), Tyr-228, and Arg-246 each bind substrate. Lys-95 functions as the Proton donor in the catalytic mechanism.

The protein belongs to the OMP decarboxylase family.

It carries out the reaction orotidine 5'-phosphate + H(+) = UMP + CO2. It participates in pyrimidine metabolism; UMP biosynthesis via de novo pathway; UMP from orotate: step 2/2. In Penicillium nalgiovense, this protein is Orotidine 5'-phosphate decarboxylase (pyrG).